Here is a 290-residue protein sequence, read N- to C-terminus: D-tagatose-1,6-bisphosphate aldolase subunit KbaY (290 aa).

Asp-82 serves as the catalytic Proton donor. Positions 83 and 180 each coordinate Zn(2+). Residue Gly-181 coordinates dihydroxyacetone phosphate. His-208 lines the Zn(2+) pocket. Residues Gly-209–Ser-211 and Asn-230–Thr-233 each bind dihydroxyacetone phosphate.

This sequence belongs to the class II fructose-bisphosphate aldolase family. TagBP aldolase KbaY subfamily. As to quaternary structure, homotetramer. Forms a complex with KbaZ. Zn(2+) is required as a cofactor.

The catalysed reaction is D-tagatofuranose 1,6-bisphosphate = D-glyceraldehyde 3-phosphate + dihydroxyacetone phosphate. Its pathway is carbohydrate metabolism; D-tagatose 6-phosphate degradation; D-glyceraldehyde 3-phosphate and glycerone phosphate from D-tagatose 6-phosphate: step 2/2. Its function is as follows. Catalytic subunit of the tagatose-1,6-bisphosphate aldolase KbaYZ, which catalyzes the reversible aldol condensation of dihydroxyacetone phosphate (DHAP or glycerone-phosphate) with glyceraldehyde 3-phosphate (G3P) to produce tagatose 1,6-bisphosphate (TBP). Requires KbaZ subunit for full activity and stability. This is D-tagatose-1,6-bisphosphate aldolase subunit KbaY from Citrobacter koseri (strain ATCC BAA-895 / CDC 4225-83 / SGSC4696).